A 507-amino-acid chain; its full sequence is Fumarate hydratase, mitochondrial (507 aa).

A mitochondrion-targeting transit peptide spans 1 to 41 (MYRALRLLARSRRLLRVPSAGAAVSGEATTLPRCAPNVARM). An N6-acetyllysine; alternate mark is found at lysine 58, lysine 63, and lysine 77. N6-succinyllysine; alternate occurs at positions 58, 63, and 77. The residue at position 82 (threonine 82) is a Phosphothreonine. An N6-acetyllysine; alternate mark is found at lysine 112 and lysine 119. N6-succinyllysine; alternate is present on residues lysine 112 and lysine 119. Residues 142–144 (SGT), 173–176 (HPND), and 183–185 (SSN) contribute to the substrate site. Lysine 210 is modified (N6-acetyllysine). Lysine 220 is subject to N6-acetyllysine; alternate. Residue lysine 220 is modified to N6-succinyllysine; alternate. Threonine 231 provides a ligand contact to substrate. Histidine 232 functions as the Proton donor/acceptor in the catalytic mechanism. Threonine 233 carries the post-translational modification Phosphothreonine. Lysine 289 is modified (N6-acetyllysine; alternate). At lysine 289 the chain carries N6-succinyllysine; alternate. The active site involves serine 362. Residues serine 363 and 368-370 (KVN) each bind substrate. Serine 363 is modified (phosphoserine). Lysine 464 and lysine 470 each carry N6-succinyllysine. Lysine 499 carries the N6-acetyllysine modification.

The protein belongs to the class-II fumarase/aspartase family. Fumarase subfamily. Homotetramer. Interacts with H2AZ1. In terms of processing, phosphorylation at Thr-233 by PRKDC in response to DNA damage promotes translocation to the nucleus and recruitment to DNA double-strand breaks (DSBs).

Its subcellular location is the mitochondrion. The protein localises to the cytoplasm. The protein resides in the cytosol. It is found in the nucleus. It localises to the chromosome. The enzyme catalyses (S)-malate = fumarate + H2O. The protein operates within carbohydrate metabolism; tricarboxylic acid cycle; (S)-malate from fumarate: step 1/1. Its function is as follows. Catalyzes the reversible stereospecific interconversion of fumarate to L-malate. Experiments in different species have demonstrated that specific isoforms of this protein act in defined pathways and favor one direction over the other. Catalyzes the hydration of fumarate to L-malate in the tricarboxylic acid (TCA) cycle to facilitate a transition step in the production of energy in the form of NADH. In terms of biological role, catalyzes the dehydration of L-malate to fumarate. Fumarate metabolism in the cytosol plays a role during urea cycle and arginine metabolism; fumarate being a by-product of the urea cycle and amino-acid catabolism. Also plays a role in DNA repair by promoting non-homologous end-joining (NHEJ). In response to DNA damage and phosphorylation by PRKDC, translocates to the nucleus and accumulates at DNA double-strand breaks (DSBs): acts by catalyzing formation of fumarate, an inhibitor of KDM2B histone demethylase activity, resulting in enhanced dimethylation of histone H3 'Lys-36' (H3K36me2). In Mus musculus (Mouse), this protein is Fumarate hydratase, mitochondrial.